The sequence spans 427 residues: SAC3 domain-containing protein 1 (427 aa).

2 stretches are compositionally biased toward basic and acidic residues: residues 1 to 10 and 117 to 127; these read MGRFKGENRS and ADPKRTVKEYS. Disordered regions lie at residues 1–53 and 101–143; these read MGRF…QDAV and LHRL…LLRP. A compositionally biased stretch (pro residues) spans 134 to 143; the sequence is PRPPPSLLRP. The region spanning 229–397 is the PCI domain; it reads QVQEGFGSLR…EGLPPPGAYH (169 aa). Phosphoserine is present on Ser425.

Belongs to the SAC3 family. As to quaternary structure, may be part of a SEM1-containing complex. Present in spleen cells (at protein level).

It localises to the cytoplasm. Its subcellular location is the cytoskeleton. It is found in the microtubule organizing center. The protein localises to the centrosome. The protein resides in the spindle. In terms of biological role, involved in centrosome duplication and mitotic progression. The polypeptide is SAC3 domain-containing protein 1 (Sac3d1) (Mus musculus (Mouse)).